Reading from the N-terminus, the 194-residue chain is uncharacterized protein (194 aa).

A signal peptide spans 1–20 (MLYKFTVLLLIYSYLRNLQA). Asparagine 31, asparagine 72, asparagine 133, and asparagine 157 each carry an N-linked (GlcNAc...) asparagine; by host glycan.

This is an uncharacterized protein from Ostreid herpesvirus 1 (isolate France) (OsHV-1).